The following is a 425-amino-acid chain: Serine--tRNA ligase (425 aa).

233–235 lines the L-serine pocket; that stretch reads TAE. ATP is bound at residue 264–266; the sequence is RRE. Residue glutamate 287 coordinates L-serine. 351–354 is a binding site for ATP; it reads EISS. An L-serine-binding site is contributed by serine 385.

It belongs to the class-II aminoacyl-tRNA synthetase family. Type-1 seryl-tRNA synthetase subfamily. As to quaternary structure, homodimer. The tRNA molecule binds across the dimer.

It is found in the cytoplasm. The enzyme catalyses tRNA(Ser) + L-serine + ATP = L-seryl-tRNA(Ser) + AMP + diphosphate + H(+). It catalyses the reaction tRNA(Sec) + L-serine + ATP = L-seryl-tRNA(Sec) + AMP + diphosphate + H(+). It participates in aminoacyl-tRNA biosynthesis; selenocysteinyl-tRNA(Sec) biosynthesis; L-seryl-tRNA(Sec) from L-serine and tRNA(Sec): step 1/1. Catalyzes the attachment of serine to tRNA(Ser). Is also able to aminoacylate tRNA(Sec) with serine, to form the misacylated tRNA L-seryl-tRNA(Sec), which will be further converted into selenocysteinyl-tRNA(Sec). This chain is Serine--tRNA ligase, found in Prochlorococcus marinus (strain AS9601).